The chain runs to 444 residues: 23S rRNA (uracil(1939)-C(5))-methyltransferase RlmD (444 aa).

The TRAM domain maps to 5–64 (KPKLNLTSQTARIVNLSHDGRGIARVNGKATFIQGALPGEVVEFQYTRVKKDFDEGKLLS). 4 residues coordinate [4Fe-4S] cluster: cysteine 77, cysteine 83, cysteine 86, and cysteine 166. Glutamine 276, phenylalanine 305, asparagine 310, glutamate 326, asparagine 353, and aspartate 374 together coordinate S-adenosyl-L-methionine. Cysteine 400 (nucleophile) is an active-site residue.

This sequence belongs to the class I-like SAM-binding methyltransferase superfamily. RNA M5U methyltransferase family. RlmD subfamily.

It catalyses the reaction uridine(1939) in 23S rRNA + S-adenosyl-L-methionine = 5-methyluridine(1939) in 23S rRNA + S-adenosyl-L-homocysteine + H(+). Catalyzes the formation of 5-methyl-uridine at position 1939 (m5U1939) in 23S rRNA. The polypeptide is 23S rRNA (uracil(1939)-C(5))-methyltransferase RlmD (Legionella pneumophila (strain Paris)).